The sequence spans 319 residues: tRNA N6-adenosine threonylcarbamoyltransferase (319 aa).

Fe cation contacts are provided by H110 and H114. Residues 132 to 136, D165, G178, D182, and N271 each bind substrate; that span reads VVSGG. Residue D300 coordinates Fe cation.

The protein belongs to the KAE1 / TsaD family. The cofactor is Fe(2+).

It is found in the cytoplasm. The enzyme catalyses L-threonylcarbamoyladenylate + adenosine(37) in tRNA = N(6)-L-threonylcarbamoyladenosine(37) in tRNA + AMP + H(+). In terms of biological role, required for the formation of a threonylcarbamoyl group on adenosine at position 37 (t(6)A37) in tRNAs that read codons beginning with adenine. Is involved in the transfer of the threonylcarbamoyl moiety of threonylcarbamoyl-AMP (TC-AMP) to the N6 group of A37, together with TsaE and TsaB. TsaD likely plays a direct catalytic role in this reaction. The sequence is that of tRNA N6-adenosine threonylcarbamoyltransferase from Mycoplasma capricolum subsp. capricolum (strain California kid / ATCC 27343 / NCTC 10154).